A 175-amino-acid chain; its full sequence is ATP-dependent protease subunit HslV (175 aa).

Threonine 2 is a catalytic residue. 3 residues coordinate Na(+): glycine 158, cysteine 161, and threonine 164.

Belongs to the peptidase T1B family. HslV subfamily. A double ring-shaped homohexamer of HslV is capped on each side by a ring-shaped HslU homohexamer. The assembly of the HslU/HslV complex is dependent on binding of ATP.

Its subcellular location is the cytoplasm. The enzyme catalyses ATP-dependent cleavage of peptide bonds with broad specificity.. Its activity is regulated as follows. Allosterically activated by HslU binding. Its function is as follows. Protease subunit of a proteasome-like degradation complex believed to be a general protein degrading machinery. The chain is ATP-dependent protease subunit HslV from Haemophilus influenzae (strain PittEE).